Reading from the N-terminus, the 492-residue chain is N-succinylglutamate 5-semialdehyde dehydrogenase (492 aa).

220 to 225 (GSASTG) serves as a coordination point for NAD(+). Active-site residues include glutamate 243 and cysteine 277.

This sequence belongs to the aldehyde dehydrogenase family. AstD subfamily.

It catalyses the reaction N-succinyl-L-glutamate 5-semialdehyde + NAD(+) + H2O = N-succinyl-L-glutamate + NADH + 2 H(+). The protein operates within amino-acid degradation; L-arginine degradation via AST pathway; L-glutamate and succinate from L-arginine: step 4/5. In terms of biological role, catalyzes the NAD-dependent reduction of succinylglutamate semialdehyde into succinylglutamate. The protein is N-succinylglutamate 5-semialdehyde dehydrogenase of Salmonella typhi.